Consider the following 390-residue polypeptide: 2-oxoisovalerate dehydrogenase subunit beta, mitochondrial (390 aa).

Residues 1–48 (MAAVAARAGGLLWLRAAGAERRRCGLRCAALVQGFLQPGGEDTAQKRR) constitute a mitochondrion transit peptide. Tyr-150 contacts thiamine diphosphate. K(+) is bound by residues Gly-176, Leu-178, Thr-179, Cys-226, and Asp-229. Lys-230 is subject to N6-acetyllysine. Asn-231 provides a ligand contact to K(+). N6-acetyllysine is present on Lys-239.

As to quaternary structure, heterotetramer of 2 alpha/BCKDHA and 2 beta chains/BCKDHB that forms the branched-chain alpha-keto acid decarboxylase (E1) component of the BCKD complex. The branched-chain alpha-ketoacid dehydrogenase is a large complex composed of three major building blocks E1, E2 and E3. It is organized around E2, a 24-meric cubic core composed of DBT, to which are associated 6 to 12 copies of E1, and approximately 6 copies of the dehydrogenase E3, a DLD dimer. It depends on thiamine diphosphate as a cofactor.

It is found in the mitochondrion matrix. It carries out the reaction N(6)-[(R)-lipoyl]-L-lysyl-[protein] + 3-methyl-2-oxobutanoate + H(+) = N(6)-[(R)-S(8)-2-methylpropanoyldihydrolipoyl]-L-lysyl-[protein] + CO2. Functionally, together with BCKDHA forms the heterotetrameric E1 subunit of the mitochondrial branched-chain alpha-ketoacid dehydrogenase (BCKD) complex. The BCKD complex catalyzes the multi-step oxidative decarboxylation of alpha-ketoacids derived from the branched-chain amino-acids valine, leucine and isoleucine producing CO2 and acyl-CoA which is subsequently utilized to produce energy. The E1 subunit catalyzes the first step with the decarboxylation of the alpha-ketoacid forming an enzyme-product intermediate. A reductive acylation mediated by the lipoylamide cofactor of E2 extracts the acyl group from the E1 active site for the next step of the reaction. The sequence is that of 2-oxoisovalerate dehydrogenase subunit beta, mitochondrial from Mus musculus (Mouse).